The sequence spans 156 residues: Small ribosomal subunit protein uS7 (156 aa).

Belongs to the universal ribosomal protein uS7 family. As to quaternary structure, part of the 30S ribosomal subunit. Contacts proteins S9 and S11.

Functionally, one of the primary rRNA binding proteins, it binds directly to 16S rRNA where it nucleates assembly of the head domain of the 30S subunit. Is located at the subunit interface close to the decoding center, probably blocks exit of the E-site tRNA. The chain is Small ribosomal subunit protein uS7 from Chelativorans sp. (strain BNC1).